A 2850-amino-acid polypeptide reads, in one-letter code: MPKLLQGVITVIDVFYQYATQHGEYDTLNKAELKELLENEFHQILKNPNDPDTVDIILQSLDRDHNKKVDFTEYLLMIFKLVQARNKIIGKDYCQVSGSKLRDDTHQHQEEQEETEKEENKRQESSFSHSSWSAGENDSYSRNVRGSLKPGTESISRRLSFQRDFSGQHNSYSGQSSSYGEQNSDSHQSSGRGQCGSGSGQSPNYGQHGSGSGQSSSNDTHGSGSGQSSGFSQHKSSSGQSSGYSQHGSGSGHSSGYGQHGSRSGQSSRGERHRSSSGSSSSYGQHGSGSRQSLGHGRQGSGSRQSPSHVRHGSGSGHSSSHGQHGSGSSYSYSRGHYESGSGQTSGFGQHESGSGQSSGYSKHGSGSGHSSSQGQHGSTSGQASSSGQHGSSSRQSSSYGQHESASRHSSGRGQHSSGSGQSPGHGQRGSGSGQSPSSGQHGTGFGRSSSSGPYVSGSGYSSGFGHHESSSEHSSGYTQHGSGSGHSSGHGQHGSRSGQSSRGERQGSSAGSSSSYGQHGSGSRQSLGHSRHGSGSGQSPSPSRGRHESGSRQSSSYGPHGYGSGRSSSRGPYESGSGHSSGLGHQESRSGQSSGYGQHGSSSGHSSTHGQHGSTSGQSSSCGQHGATSGQSSSHGQHGSGSSQSSRYGQQGSGSGQSPSRGRHGSDFGHSSSYGQHGSGSGWSSSNGPHGSVSGQSSGFGHKSGSGQSSGYSQHGSGSSHSSGYRKHGSRSGQSSRSEQHGSSSGLSSSYGQHGSGSHQSSGHGRQGSGSGHSPSRVRHGSSSGHSSSHGQHGSGTSCSSSCGHYESGSGQASGFGQHESGSGQGYSQHGSASGHFSSQGRHGSTSGQSSSSGQHDSSSGQSSSYGQHESASHHASGRGRHGSGSGQSPGHGQRGSGSGQSPSYGRHGSGSGRSSSSGRHGSGSGQSSGFGHKSSSGQSSGYTQHGSGSGHSSSYEQHGSRSGQSSRSEQHGSSSGSSSSYGQHGSGSRQSLGHGQHGSGSGQSPSPSRGRHGSGSGQSSSYGPYRSGSGWSSSRGPYESGSGHSSGLGHRESRSGQSSGYGQHGSSSGHSSTHGQHGSTSGQSSSCGQHGASSGQSSSHGQHGSGSSQSSGYGRQGSGSGQSPGHGQRGSGSRQSPSYGRHGSGSGRSSSSGQHGSGLGESSGFGHHESSSGQSSSYSQHGSGSGHSSGYGQHGSRSGQSSRGERHGSSSGSSSHYGQHGSGSRQSSGHGRQGSGSGHSPSRGRHGSGLGHSSSHGQHGSGSGRSSSRGPYESRSGHSSVFGQHESGSGHSSAYSQHGSGSGHFCSQGQHGSTSGQSSTFDQEGSSTGQSSSYGHRGSGSSQSSGYGRHGAGSGQSPSRGRHGSGSGHSSSYGQHGSGSGWSSSSGRHGSGSGQSSGFGHHESSSWQSSGCTQHGSGSGHSSSYEQHGSRSGQSSRGERHGSSSGSSSSYGQHGSGSRQSLGHGQHGSGSGQSPSPSRGRHGSGSGQSSSYSPYGSGSGWSSSRGPYESGSSHSSGLGHRESRSGQSSGYGQHGSSSGHSSTHGQHGSTSGQSSSCGQHGASSGQSSSHGQHGSGSSQSSGYGRQGSGSGQSPGHGQRGSGSRQSPSYGRHGSGSGRSSSSGQHGSGLGESSGFGHHESSSGQSSSYSQHGSGSGHSSGYGQHGSRSGQSSRGERHGSSSRSSSRYGQHGSGSRQSSGHGRQGSGSGQSPSRGRHGSGLGHSSSHGQHGSGSGRSSSRGPYESRSGHSSVFGQHESGSGHSSAYSQHGSGSGHFCSQGQHGSTSGQSSTFDQEGSSTGQSSSHGQHGSGSSQSSSYGQQGSGSGQSPSRGRHGSGSGHSSSYGQHGSGSGWSSSSGRHGSGSGQSSGFGHHESSSWQSSGYTQHGSGSGHSSSYEQHGSRSGQSSRGEQHGSSSGSSSSYGQHGSGSRQSLGHGQHGSGSGQSPSPSRGRHGSGSGQSSSYGPYGSGSGWSSSRGPYESGSGHSSGLGHRESRSGQSSGYGQHGSSSGHSSTHGQHGSASGQSSSCGQHGASSGQSSSHGQHGSGSSQSSGYGRQGSGSGQSPGHGQRGSGSRQSPSYGRHGSGSGRSSSSGQHGPGLGESSGFGHHESSSGQSSSYSQHGSGSGHSSGYGQHGSRSGQSSRGERHGSSSGSSSRYGQHGSGSRQSSGHGRQGSGSGHSPSRGRHGSGSGHSSSHGQHGSGSGRSSSRGPYESRSGHSSVFGQHESGSGHSSAYSQHGSGSGHFCSQGQHGSTSGQSSTFDQEGSSTGQSSSHGQHGSGSSQSSSYGQQGSGSGQSPSRGRHGSGSGHSSSYGQHGSGSGWSSSSGRHGSGSGQSSGFGHHESSSWQSSGYTQHGSGSGHSSSYEQHGSRSGQSSRGERHGSSSGSSSSYGQHGSGSRQSLGHGQHGSGSGQSPSPSRGRHGSGSGQSSSYSPYGSGSGWSSSRGPYESGSGHSSGLGHRESRSGQSSGYGQHGSSSGHSSTHGQHGSTSGQSSSCGQHGASSGQSSSHGQHGSGSSQSSGYGRQGSGSGQSPGHGQRGSGSRQSPSYGRHGSGSGRSSSSGQHGSGLGESSGFGHHESSSGQSSSYSQHGSGSGHSSGYGQHGSRSGQSSRGERHGSSSGSSSHYGQHGSGSRQSSGHGRQGSGSGQSPSRGRHGSGLGHSSSHGQHGSGSGRSSSRGPYESRLGHSSVFGQHESGSGHSSAYSQHGSGSGHFCSQGQHGSTSGQSSTFDQEGSSTGQSSSYGHRGSGSSQSSGYGRHGAGSGQSLSHGRHGSGSGQSSSYGQHGSGSGQSSGYSQHGSGSGQDGYSYCKGGSNHDGGSSGSYFLSFPSSTSPYEYVQEQRCYFYQ.

The segment at 1–81 (MPKLLQGVIT…TEYLLMIFKL (81 aa)) is S-100-like. 2 consecutive EF-hand domains span residues 13–48 (DVFYQYATQHGEYDTLNKAELKELLENEFHQILKNP) and 49–84 (NDPDTVDIILQSLDRDHNKKVDFTEYLLMIFKLVQA). Ca(2+) is bound by residues Thr27, Glu32, Asp62, Asp64, Asn66, Lys68, and Glu73. 13 consecutive repeat copies span residues 97–187 (SGSK…SDSH), 188–278 (QSSG…SSSG), 279–369 (SSSS…SGSG), 370–460 (HSSS…SGSG), 474–566 (HSSG…YGSG), 593–683 (QSSG…SGSG), 685–747 (SSSN…SSSG), 748–836 (LSSS…SASG), 839–875 (SSQGRHGSTSGQSSSSGQHDSSSGQSSSYGQHESASH), 876–965 (HASG…SRSG), 966–1004 (QSSRSEQHGSSSGSSSSYGQHGSGSRQSLGHGQHGSGSG), 1007–1097 (PSPS…ASSG), and 1098–1188 (QSSS…SGSG). Residues 100-110 (KLRDDTHQHQE) show a composition bias toward basic and acidic residues. Disordered regions lie at residues 100-154 (KLRD…GTES) and 166-2817 (SGQH…KGGS). The span at 125 to 144 (SSFSHSSWSAGENDSYSRNV) shows a compositional bias: polar residues. Composition is skewed to low complexity over residues 167 to 192 (GQHNSYSGQSSSYGEQNSDSHQSSGR) and 226 to 248 (GQSSGFSQHKSSSGQSSGYSQHG). Residues 249–259 (SGSGHSSGYGQ) are compositionally biased toward gly residues. Low complexity-rich tracts occupy residues 276–308 (SSGSSSSYGQHGSGSRQSLGHGRQGSGSRQSPS) and 317–421 (GHSS…SGSG). A compositionally biased stretch (gly residues) spans 422-433 (QSPGHGQRGSGS). 2 stretches are compositionally biased toward low complexity: residues 449–465 (SSSSGPYVSGSGYSSGF) and 473–482 (EHSSGYTQHG). Residues 483–493 (SGSGHSSGHGQ) show a composition bias toward gly residues. Composition is skewed to low complexity over residues 494 to 529 (HGSRSGQSSRGERQGSSAGSSSSYGQHGSGSRQSLG), 555 to 661 (SSSY…QSPS), 670 to 724 (GHSS…SHSS), 732 to 765 (RSGQSSRSEQHGSSSGLSSSYGQHGSGSHQSSGH), 782 to 806 (GSSSGHSSSHGQHGSGTSCSSSCGH), and 818 to 871 (GQHE…GQHE). Ser659 and Ser661 each carry phosphoserine. Residues 884-900 (GSGSGQSPGHGQRGSGS) are compositionally biased toward gly residues. Residue Ser890 is modified to Phosphoserine. Composition is skewed to low complexity over residues 901 to 921 (GQSPSYGRHGSGSGRSSSSGR) and 931 to 996 (GFGH…SLGH). Ser993 and Ser1008 each carry phosphoserine. Low complexity-rich tracts occupy residues 1019–1050 (GQSSSYGPYRSGSGWSSSRGPYESGSGHSSGL) and 1057–1115 (SGQS…SSGY). A compositionally biased stretch (gly residues) spans 1116–1132 (GRQGSGSGQSPGHGQRG). Low complexity-rich tracts occupy residues 1133-1156 (SGSRQSPSYGRHGSGSGRSSSSGQ) and 1166-1184 (GFGHHESSSGQSSSYSQHG). Over residues 1185 to 1195 (SGSGHSSGYGQ) the composition is skewed to gly residues. Arg1205 is modified (omega-N-methylarginine). Composition is skewed to low complexity over residues 1211 to 1232 (SSSGSSSHYGQHGSGSRQSSGH) and 1253 to 1276 (GHSSSHGQHGSGSGRSSSRGPYES). Repeat unit 14 spans residues 1215–1305 (SSSHYGQHGS…AYSQHGSGSG (91 aa)). The segment covering 1280 to 1301 (HSSVFGQHESGSGHSSAYSQHG) has biased composition (polar residues). 5 stretches are compositionally biased toward low complexity: residues 1309–1322 (SQGQHGSTSGQSST), 1331–1349 (GQSSSYGHRGSGSSQSSGY), 1370–1390 (GHSSSYGQHGSGSGWSSSSGR), 1400–1438 (GFGHHESSSWQSSGCTQHGSGSGHSSSYEQHGSRSGQSS), and 1445–1466 (SSSGSSSSYGQHGSGSRQSLGH). Repeat copies occupy residues 1332–1422 (QSSS…SGSG), 1423–1474 (HSSS…SGSG), 1477–1567 (PSPS…ASSG), 1568–1658 (QSSS…SGSG), 1685–1775 (SSSR…SGSG), 1802–1892 (QSSS…SGSG), 1893–1944 (HSSS…SGSG), 1947–2037 (PSPS…ASSG), 2038–2128 (QSSS…SGSG), 2155–2245 (SSSR…SGSG), 2272–2362 (QSSS…SGSG), 2363–2414 (HSSS…SGSG), 2417–2507 (PSPS…ASSG), 2508–2598 (QSSS…SGSG), 2625–2715 (SSSH…SGSG), and 2716–2806 (HFCS…SGSG). Phosphoserine is present on residues Ser1463 and Ser1478. Low complexity-rich tracts occupy residues 1489–1520 (GQSSSYSPYGSGSGWSSSRGPYESGSSHSSGL) and 1527–1585 (SGQS…SSGY). Gly residues predominate over residues 1586 to 1602 (GRQGSGSGQSPGHGQRG). Composition is skewed to low complexity over residues 1603 to 1626 (SGSRQSPSYGRHGSGSGRSSSSGQ) and 1636 to 1654 (GFGHHESSSGQSSSYSQHG). The span at 1655–1665 (SGSGHSSGYGQ) shows a compositional bias: gly residues. The segment covering 1682–1702 (SSRSSSRYGQHGSGSRQSSGH) has biased composition (low complexity). A phosphoserine mark is found at Ser1712 and Ser1714. Positions 1723 to 1746 (GHSSSHGQHGSGSGRSSSRGPYES) are enriched in low complexity. Positions 1750 to 1771 (HSSVFGQHESGSGHSSAYSQHG) are enriched in polar residues. Composition is skewed to low complexity over residues 1779–1831 (SQGQ…QSPS), 1840–1860 (GHSSSYGQHGSGSGWSSSSGR), and 1870–1936 (GFGH…SLGH). Ser1829 and Ser1831 each carry phosphoserine. 2 positions are modified to phosphoserine: Ser1933 and Ser1948. Composition is skewed to low complexity over residues 1959-1990 (GQSSSYGPYGSGSGWSSSRGPYESGSGHSSGL) and 1997-2055 (SGQS…SSGY). The segment covering 2056 to 2072 (GRQGSGSGQSPGHGQRG) has biased composition (gly residues). Composition is skewed to low complexity over residues 2073–2096 (SGSRQSPSYGRHGSGSGRSSSSGQ) and 2106–2124 (GFGHHESSSGQSSSYSQHG). Over residues 2125–2135 (SGSGHSSGYGQ) the composition is skewed to gly residues. 2 stretches are compositionally biased toward low complexity: residues 2151-2172 (SSSGSSSRYGQHGSGSRQSSGH) and 2193-2216 (GHSSSHGQHGSGSGRSSSRGPYES). Positions 2220-2241 (HSSVFGQHESGSGHSSAYSQHG) are enriched in polar residues. Low complexity-rich tracts occupy residues 2249-2301 (SQGQ…QSPS), 2310-2330 (GHSSSYGQHGSGSGWSSSSGR), 2340-2378 (GFGHHESSSWQSSGYTQHGSGSGHSSSYEQHGSRSGQSS), and 2385-2406 (SSSGSSSSYGQHGSGSRQSLGH). A phosphoserine mark is found at Ser2299 and Ser2301. A phosphoserine mark is found at Ser2403 and Ser2418. Low complexity-rich tracts occupy residues 2429–2460 (GQSSSYSPYGSGSGWSSSRGPYESGSGHSSGL) and 2467–2525 (SGQS…SSGY). A compositionally biased stretch (gly residues) spans 2526-2542 (GRQGSGSGQSPGHGQRG). Low complexity-rich tracts occupy residues 2543–2566 (SGSRQSPSYGRHGSGSGRSSSSGQ) and 2576–2594 (GFGHHESSSGQSSSYSQHG). Gly residues predominate over residues 2595-2605 (SGSGHSSGYGQ). The span at 2621-2642 (SSSGSSSHYGQHGSGSRQSSGH) shows a compositional bias: low complexity. 2 positions are modified to phosphoserine: Ser2652 and Ser2654. The span at 2663–2682 (GHSSSHGQHGSGSGRSSSRG) shows a compositional bias: low complexity. The span at 2698 to 2711 (ESGSGHSSAYSQHG) shows a compositional bias: polar residues. 3 stretches are compositionally biased toward low complexity: residues 2719-2732 (SQGQHGSTSGQSST), 2741-2759 (GQSSSYGHRGSGSSQSSGY), and 2795-2816 (SSGYSQHGSGSGQDGYSYCKGG).

The protein belongs to the S100-fused protein family. In the N-terminal section; belongs to the S-100 family. In terms of processing, processed during the process of epidermal differentiation. Forms covalent cross-links mediated by transglutaminase TGM3, between glutamine and the epsilon-amino group of lysine residues (in vitro). Expressed in cornified epidermis, psoriatic and regenerating skin after wounding. Found in the upper granular layer and in the entire cornified layer of epidermis.

The protein resides in the cytoplasmic granule. Its function is as follows. Component of the epidermal cornified cell envelopes. The polypeptide is Hornerin (HRNR) (Homo sapiens (Human)).